The sequence spans 432 residues: MYFHGTTKVNEKGHLEIGGVDTIELAQKYGTPLYVYDVALIRERARGFKNTFDELGIKAQVAYASKAFSTVAMIQLAEEEGLSLDVVSGGELYTALVAGFPVHKIHFHGNNKSRAELEMALEHQIGCIVVDNFHELDLIDSICSEKNVKTNILLRVTPGIEAHTHDYILTGQEDSKFGFDLQNGQAEKALQIALNSNFVEVLGVHCHIGSQIFDTTGFVLAARKIFEKLKEWKDRLSYEPKVLNLGGGFGIRYTEEDDPIPASQYVKEIINEVKKQVSAYSMKMPEIWIEPGRSLVGDAGTTLYQIGSRKDVPNVRHYVAVDGGMSDNIRPALYNAKYEAVLANKPLAKADETVSIAGKCCESGDMLIWDLPLPKADSDDILAVFCTGAYGYSMANNYNRIPRPAVVFVENGESMLVVKRKHMRTSSAMICL.

Lysine 66 bears the N6-(pyridoxal phosphate)lysine mark. Residues glycine 248 and 290–293 contribute to the pyridoxal 5'-phosphate site; that span reads EPGR. Substrate contacts are provided by arginine 293, arginine 330, and tyrosine 334. Cysteine 361 acts as the Proton donor in catalysis. 2 residues coordinate substrate: glutamate 362 and tyrosine 390. Tyrosine 390 contributes to the pyridoxal 5'-phosphate binding site.

Belongs to the Orn/Lys/Arg decarboxylase class-II family. LysA subfamily. Homodimer. It depends on pyridoxal 5'-phosphate as a cofactor.

It catalyses the reaction meso-2,6-diaminopimelate + H(+) = L-lysine + CO2. It participates in amino-acid biosynthesis; L-lysine biosynthesis via DAP pathway; L-lysine from DL-2,6-diaminopimelate: step 1/1. Its function is as follows. Specifically catalyzes the decarboxylation of meso-diaminopimelate (meso-DAP) to L-lysine. The chain is Diaminopimelate decarboxylase from Bacillus methanolicus.